We begin with the raw amino-acid sequence, 610 residues long: Pentatricopeptide repeat-containing protein At3g15590, mitochondrial (610 aa).

The transit peptide at 1 to 71 (MYSLSRILQR…FSRFFGIHKL (71 aa)) directs the protein to the mitochondrion. Positions 88–142 (EELSESEEAVPVSGDVPEGVVDDDSLFEPELGSDNDDLEIEEKHSKDGGKPTKKR) are disordered. Residues 107-127 (VVDDDSLFEPELGSDNDDLEI) show a composition bias toward acidic residues. The span at 128-137 (EEKHSKDGGK) shows a compositional bias: basic and acidic residues. PPR repeat units lie at residues 241–275 (GEVV…KFPT), 276–309 (SVFA…NIKP), 310–344 (SRAT…GIEL), 345–379 (DPEL…GLQQ), 380–410 (TPWV…VDQN), 412–442 (RYDN…LVEK), 447–481 (PMMP…GIAI), 482–517 (GPST…KMRP), and 518–552 (MFTT…SYAA).

Belongs to the PPR family. P subfamily.

It localises to the mitochondrion. This is Pentatricopeptide repeat-containing protein At3g15590, mitochondrial from Arabidopsis thaliana (Mouse-ear cress).